Consider the following 146-residue polypeptide: 3-hydroxyacyl-[acyl-carrier-protein] dehydratase FabZ (146 aa).

His46 is a catalytic residue.

This sequence belongs to the thioester dehydratase family. FabZ subfamily.

It is found in the cytoplasm. The enzyme catalyses a (3R)-hydroxyacyl-[ACP] = a (2E)-enoyl-[ACP] + H2O. Functionally, involved in unsaturated fatty acids biosynthesis. Catalyzes the dehydration of short chain beta-hydroxyacyl-ACPs and long chain saturated and unsaturated beta-hydroxyacyl-ACPs. The sequence is that of 3-hydroxyacyl-[acyl-carrier-protein] dehydratase FabZ from Acinetobacter baumannii (strain ATCC 17978 / DSM 105126 / CIP 53.77 / LMG 1025 / NCDC KC755 / 5377).